The following is an 80-amino-acid chain: Raniseptin-2 (80 aa).

Positions 1–22 (MAFLKKSLFLVLFLGIVSLSIC) are cleaved as a signal peptide. The propeptide occupies 23-49 (EEEKRVGEEEEKQEEENEELSEEELRE). Residues 27–46 (RVGEEEEKQEEENEELSEEE) form a disordered region. Over residues 30–44 (EEEEKQEEENEELSE) the composition is skewed to acidic residues.

This sequence belongs to the frog skin active peptide (FSAP) family. Dermaseptin subfamily. In terms of tissue distribution, expressed by the skin glands.

The protein resides in the secreted. Has antibacterial activity. This is Raniseptin-2 from Boana raniceps (Chaco tree frog).